The chain runs to 326 residues: uncharacterized protein (326 aa).

Residues 15-76 enclose the S4 RNA-binding domain; that stretch reads VRIEKFCLKL…IEPYLHNHSE (62 aa). Residue aspartate 147 is part of the active site.

This sequence belongs to the pseudouridine synthase RluA family.

The enzyme catalyses a uridine in RNA = a pseudouridine in RNA. This is an uncharacterized protein from Mycoplasma pneumoniae (strain ATCC 29342 / M129 / Subtype 1) (Mycoplasmoides pneumoniae).